Consider the following 569-residue polypeptide: F-box-like/WD repeat-containing protein TBL1X (569 aa).

One can recognise a LisH domain in the interval T55–Q87. The 46-residue stretch at G92–A137 folds into the F-box-like domain. The residue at position 153 (K153) is an N6-acetyllysine. The disordered stretch occupies residues T170 to H195. Residue S175 is modified to Phosphoserine. WD repeat units lie at residues G222–S261, P278–L317, Q319–Q358, F361–Q401, G402–D441, A444–T492, K495–S534, and R536–R568. K332 participates in a covalent cross-link: Glycyl lysine isopeptide (Lys-Gly) (interchain with G-Cter in SUMO2).

The protein belongs to the WD repeat EBI family. In terms of assembly, homotetramer; dimer of dimers. Component of the N-Cor repressor complex, at least composed of NCOR1, NCOR2, HDAC3, TBL1X, TBL1R, CORO2A and GPS2. Interacts with GPS2 (when sumoylated); leading to protect GPS2 against degradation by the proteasome. Component of a E3 ubiquitin ligase complex containing UBE2D1, SIAH1, CACYBP/SIP, SKP1, APC and TBL1X. Probably part of other corepressor complexes, that do not contain NCOR1 and NCOR2. Interacts with histones H2B, H3a and H4. Interacts with MECP2; recruits TBL1X to the heterochromatin foci. Interacts with USP44.

The protein localises to the nucleus. Functionally, F-box-like protein involved in the recruitment of the ubiquitin/19S proteasome complex to nuclear receptor-regulated transcription units. Plays an essential role in transcription activation mediated by nuclear receptors. Probably acts as integral component of corepressor complexes that mediates the recruitment of the 19S proteasome complex, leading to the subsequent proteasomal degradation of transcription repressor complexes, thereby allowing cofactor exchange. This Macaca fascicularis (Crab-eating macaque) protein is F-box-like/WD repeat-containing protein TBL1X (TBL1X).